The sequence spans 245 residues: 1-(5-phosphoribosyl)-5-[(5-phosphoribosylamino)methylideneamino] imidazole-4-carboxamide isomerase (245 aa).

Aspartate 7 acts as the Proton acceptor in catalysis. Aspartate 129 serves as the catalytic Proton donor.

It belongs to the HisA/HisF family.

The protein localises to the cytoplasm. The catalysed reaction is 1-(5-phospho-beta-D-ribosyl)-5-[(5-phospho-beta-D-ribosylamino)methylideneamino]imidazole-4-carboxamide = 5-[(5-phospho-1-deoxy-D-ribulos-1-ylimino)methylamino]-1-(5-phospho-beta-D-ribosyl)imidazole-4-carboxamide. It functions in the pathway amino-acid biosynthesis; L-histidine biosynthesis; L-histidine from 5-phospho-alpha-D-ribose 1-diphosphate: step 4/9. This is 1-(5-phosphoribosyl)-5-[(5-phosphoribosylamino)methylideneamino] imidazole-4-carboxamide isomerase from Yersinia pestis bv. Antiqua (strain Antiqua).